The sequence spans 597 residues: Probable E3 ubiquitin-protein ligase ARI1 (597 aa).

Residues 119 to 333 (SQMSCDVCME…IAGHSCGRYQ (215 aa)) form a TRIAD supradomain region. Zn(2+) contacts are provided by Cys-123, Cys-126, Cys-140, His-142, Cys-145, Cys-148, Cys-167, Cys-172, Cys-214, Cys-220, Cys-236, Cys-238, Cys-243, Cys-246, His-251, Cys-256, Cys-283, and Cys-286. The RING-type 1 zinc-finger motif lies at 123–172 (CDVCMEDLPGDHMTRMDCGHCFCNNCWTEHFTVQINEGQSKRIRCMAHQC). Residues 194–256 (AKFDRYLLES…LCQAHSPCSC (63 aa)) form an IBR-type zinc finger. The RING-type 2; atypical zinc-finger motif lies at 283-311 (CPKCYKPVEKNGGCNLVRCICGQCFCWLC). Cys-296 is a catalytic residue. Residues Cys-301, Cys-303, Cys-308, Cys-311, His-319, and Cys-329 each contribute to the Zn(2+) site. The tract at residues 536–575 (FQPLDSGTSGVTSRPEQASGSRSSEDTICSSSQKRPKKEG) is disordered. The span at 540–568 (DSGTSGVTSRPEQASGSRSSEDTICSSSQ) shows a compositional bias: polar residues.

The protein belongs to the RBR family. Ariadne subfamily. Zn(2+) is required as a cofactor. Ubiquitous.

The enzyme catalyses [E2 ubiquitin-conjugating enzyme]-S-ubiquitinyl-L-cysteine + [acceptor protein]-L-lysine = [E2 ubiquitin-conjugating enzyme]-L-cysteine + [acceptor protein]-N(6)-ubiquitinyl-L-lysine.. Its pathway is protein modification; protein ubiquitination. Might act as an E3 ubiquitin-protein ligase, or as part of E3 complex, which accepts ubiquitin from specific E2 ubiquitin-conjugating enzymes and then transfers it to substrates. This Arabidopsis thaliana (Mouse-ear cress) protein is Probable E3 ubiquitin-protein ligase ARI1 (ARI1).